Consider the following 169-residue polypeptide: UPF0725 protein At2g19200 (169 aa).

It belongs to the UPF0725 (EMB2204) family.

The sequence is that of UPF0725 protein At2g19200 from Arabidopsis thaliana (Mouse-ear cress).